Here is a 114-residue protein sequence, read N- to C-terminus: Hemerythrin subunit 1 (114 aa).

His-26, His-55, Glu-59, His-74, His-78, His-102, and Asp-107 together coordinate Fe cation.

It belongs to the hemerythrin family.

Its function is as follows. Hemerythrin is a respiratory protein in blood cells of certain marine worms. The oxygen-binding site in each chain contains two iron atoms. The chain is Hemerythrin subunit 1 from Golfingia vulgaris (Marine worm).